The sequence spans 452 residues: Pup--protein ligase (452 aa).

Position 9 (Glu9) interacts with Mg(2+). Position 53 (Arg53) interacts with ATP. Residue Tyr55 participates in Mg(2+) binding. The Proton acceptor role is filled by Asp57. Glu63 lines the Mg(2+) pocket. Residues Thr66 and Trp419 each coordinate ATP.

This sequence belongs to the Pup ligase/Pup deamidase family. Pup-conjugating enzyme subfamily.

The catalysed reaction is ATP + [prokaryotic ubiquitin-like protein]-L-glutamate + [protein]-L-lysine = ADP + phosphate + N(6)-([prokaryotic ubiquitin-like protein]-gamma-L-glutamyl)-[protein]-L-lysine.. The protein operates within protein degradation; proteasomal Pup-dependent pathway. It participates in protein modification; protein pupylation. Catalyzes the covalent attachment of the prokaryotic ubiquitin-like protein modifier Pup to the proteasomal substrate proteins, thereby targeting them for proteasomal degradation. This tagging system is termed pupylation. The ligation reaction involves the side-chain carboxylate of the C-terminal glutamate of Pup and the side-chain amino group of a substrate lysine. This Mycobacterium leprae (strain Br4923) protein is Pup--protein ligase.